The sequence spans 252 residues: Imidazole glycerol phosphate synthase subunit HisF (252 aa).

Residues D11 and D130 contribute to the active site.

The protein belongs to the HisA/HisF family. As to quaternary structure, heterodimer of HisH and HisF.

The protein localises to the cytoplasm. It carries out the reaction 5-[(5-phospho-1-deoxy-D-ribulos-1-ylimino)methylamino]-1-(5-phospho-beta-D-ribosyl)imidazole-4-carboxamide + L-glutamine = D-erythro-1-(imidazol-4-yl)glycerol 3-phosphate + 5-amino-1-(5-phospho-beta-D-ribosyl)imidazole-4-carboxamide + L-glutamate + H(+). It functions in the pathway amino-acid biosynthesis; L-histidine biosynthesis; L-histidine from 5-phospho-alpha-D-ribose 1-diphosphate: step 5/9. Its function is as follows. IGPS catalyzes the conversion of PRFAR and glutamine to IGP, AICAR and glutamate. The HisF subunit catalyzes the cyclization activity that produces IGP and AICAR from PRFAR using the ammonia provided by the HisH subunit. This Pelotomaculum thermopropionicum (strain DSM 13744 / JCM 10971 / SI) protein is Imidazole glycerol phosphate synthase subunit HisF.